Consider the following 441-residue polypeptide: GTPase Der (441 aa).

EngA-type G domains lie at 4 to 169 (PIVA…PEGS) and 178 to 353 (PKVA…DAQT). GTP contacts are provided by residues 10–17 (GRPNVGKS), 57–61 (DTGGI), 120–123 (NKVD), 184–191 (GKPNVGKS), 231–235 (DTAGL), and 296–299 (NKWD). The region spanning 354–438 (MRIPTGVLNE…SIRFINRERK (85 aa)) is the KH-like domain.

It belongs to the TRAFAC class TrmE-Era-EngA-EngB-Septin-like GTPase superfamily. EngA (Der) GTPase family. Associates with the 50S ribosomal subunit.

Its function is as follows. GTPase that plays an essential role in the late steps of ribosome biogenesis. The protein is GTPase Der of Lachnospira eligens (strain ATCC 27750 / DSM 3376 / VPI C15-48 / C15-B4) (Eubacterium eligens).